The following is a 308-amino-acid chain: MSFTRQEPPRPVIAVVGPTGSGKSDLGVNLALALDGEVINADALQFYRGMDIGTAKITVEERRGVPHHLLDSMDVTQEASVADFQDECRAAINDIHSRGKRAILVGGSGLYVRAALDVLEFPGTDPTLRKELEEECENNGLAPLRARLEEVDPVSAARLGDARRVIRALEVHGLTGRPFSSFMPQREYFQPALQIGLEVDREQLRERLAVRVHRMVEGGLQQEVERLDAVGLRSGKTASRALGYAQFLKVLDGEMTADTAAEETIVATRQFARRQLTWFRADPRITWLGWQDPELVDKAVKVVNAAST.

Position 17-24 (17-24 (GPTGSGKS)) interacts with ATP. 19–24 (TGSGKS) lines the substrate pocket.

It belongs to the IPP transferase family. As to quaternary structure, monomer. Mg(2+) is required as a cofactor.

The catalysed reaction is adenosine(37) in tRNA + dimethylallyl diphosphate = N(6)-dimethylallyladenosine(37) in tRNA + diphosphate. Catalyzes the transfer of a dimethylallyl group onto the adenine at position 37 in tRNAs that read codons beginning with uridine, leading to the formation of N6-(dimethylallyl)adenosine (i(6)A). The sequence is that of tRNA dimethylallyltransferase from Paenarthrobacter aurescens (strain TC1).